A 1101-amino-acid polypeptide reads, in one-letter code: Leucine-rich repeat receptor-like serine/threonine-protein kinase At1g17230 (1101 aa).

Positions 1–23 (MRGRICFLAIVILCSFSFILVRS) are cleaved as a signal peptide. Residues 24–734 (LNEEGRVLLE…WLINGSQRQK (711 aa)) lie on the Extracellular side of the membrane. 4 N-linked (GlcNAc...) asparagine glycosylation sites follow: N39, N57, N78, and N97. 26 LRR repeats span residues 66 to 90 (LRTV…ICKL), 91 to 115 (HGLR…SLCR), 117 to 137 (LEVL…QLTM), 138 to 162 (IITL…IGNL), 163 to 186 (SSLQ…MAKL), 188 to 210 (QLRI…ISGC), 211 to 234 (ESLK…LEKL), 235 to 258 (QNLT…VGNI), 260 to 282 (RLEV…IGKL), 283 to 306 (TKMK…IGNL), 308 to 329 (DAAE…EFGH), 330 to 354 (ILNL…LGEL), 355 to 379 (TLLE…QFLP), 381 to 402 (LVDL…IGFY), 403 to 426 (SNFS…FCRF), 427 to 450 (QTLI…LKTC), 451 to 474 (KSLT…LFNL), 476 to 498 (NLTA…LGKL), 499 to 522 (KNLE…IGNL), 524 to 546 (KIVG…LGSC), 548 to 569 (TIQR…ELGQ), 570 to 593 (LVYL…SFGD), 595 to 618 (TRLM…LGKL), 619 to 643 (TSLQ…LGNL), 644 to 667 (QMLE…IGNL), and 669 to 692 (SLLI…VFQR). N-linked (GlcNAc...) asparagine glycosylation is found at N161 and N174. N-linked (GlcNAc...) asparagine glycosylation is found at N236 and N257. N-linked (GlcNAc...) asparagine glycosylation is present at N368. Residue N404 is glycosylated (N-linked (GlcNAc...) asparagine). N-linked (GlcNAc...) asparagine glycans are attached at residues N476, N490, N510, N521, and N529. Residues N626 and N631 are each glycosylated (N-linked (GlcNAc...) asparagine). N-linked (GlcNAc...) asparagine glycans are attached at residues N674 and N728. A helical transmembrane segment spans residues 735–755 (ILTITCIVIGSVFLITFLGLC). The Cytoplasmic portion of the chain corresponds to 756-1101 (WTIKRREPAF…LEEANSSKEI (346 aa)). Phosphothreonine is present on residues T788 and T796. Residues 799 to 1081 (FSEDVVLGRG…ITEARGSSSL (283 aa)) form the Protein kinase domain. ATP-binding positions include 805–813 (LGRGACGTV) and K827. Residues Y874 and Y913 each carry the phosphotyrosine modification. D926 (proton acceptor) is an active-site residue. At S960 the chain carries Phosphoserine. A phosphotyrosine mark is found at Y968 and Y975. T976 is modified (phosphothreonine). A disordered region spans residues 1076 to 1101 (RGSSSLSSSSITSETPLEEANSSKEI). The span at 1078–1088 (SSSLSSSSITS) shows a compositional bias: low complexity.

It belongs to the protein kinase superfamily. Ser/Thr protein kinase family.

The protein localises to the cell membrane. It carries out the reaction L-seryl-[protein] + ATP = O-phospho-L-seryl-[protein] + ADP + H(+). The enzyme catalyses L-threonyl-[protein] + ATP = O-phospho-L-threonyl-[protein] + ADP + H(+). This Arabidopsis thaliana (Mouse-ear cress) protein is Leucine-rich repeat receptor-like serine/threonine-protein kinase At1g17230.